Reading from the N-terminus, the 248-residue chain is tRNA (guanine-N(1)-)-methyltransferase (248 aa).

S-adenosyl-L-methionine contacts are provided by residues Gly-113 and 133–138 (IGDYVL).

This sequence belongs to the RNA methyltransferase TrmD family. In terms of assembly, homodimer.

The protein resides in the cytoplasm. It catalyses the reaction guanosine(37) in tRNA + S-adenosyl-L-methionine = N(1)-methylguanosine(37) in tRNA + S-adenosyl-L-homocysteine + H(+). In terms of biological role, specifically methylates guanosine-37 in various tRNAs. This is tRNA (guanine-N(1)-)-methyltransferase from Shewanella baltica (strain OS223).